Reading from the N-terminus, the 294-residue chain is MQQLVRAGARAWLRPRGCRGLSALTEEAVQSAEKPEPLANAGPQAPVLRRCELPVPLHRRPVQAWVESLRGYEQERVGLTELHPDVFSTAPRLDILHQVAIWQKNFKRISYAKTKTRAEVRGGGRKPWQQKGSGRARHGSIRSPIWRGGGVAHGPRGPTSYYYMLPMKVRVQGLKVALTVKLAQDDLHIVDSLELPTTDPQYLMELARYRRWGDSVLFVDLEHEDMPQNVVAATSGLKTFNLIPAIGLNVHSMLKHQTLVLTLPTVAFLEEKLLWHDSRYTPLYPFRLPYRDFP.

The tract at residues 120-139 (VRGGGRKPWQQKGSGRARHG) is disordered. At R147 the chain carries Omega-N-methylarginine.

Belongs to the universal ribosomal protein uL4 family. As to quaternary structure, component of the mitochondrial ribosome large subunit (39S) which comprises a 16S rRNA and about 50 distinct proteins. Interacts with MIEF1 upstream open reading frame protein.

Its subcellular location is the mitochondrion. This is Large ribosomal subunit protein uL4m (MRPL4) from Bos taurus (Bovine).